Here is a 302-residue protein sequence, read N- to C-terminus: B3 domain-containing protein At3g17010 (302 aa).

The TF-B3 1 DNA-binding region spans 21-116 (FFKIFQRADL…VFHVNIYEQN (96 aa)). The interval 123 to 192 (PRKFQTMGPS…KVKKKSKSKS (70 aa)) is disordered. Over residues 135-174 (IKKEEGENSLIDVKKEEESDESPGRAEFLVRKKKTEDSKS) the composition is skewed to basic and acidic residues. The segment covering 175–192 (SKKKMTRNKVKKKSKSKS) has biased composition (basic residues). The segment at residues 199-292 (VPEFKITIRK…EFVLLTSKKN (94 aa)) is a DNA-binding region (TF-B3 2).

The protein localises to the nucleus. This is B3 domain-containing protein At3g17010 from Arabidopsis thaliana (Mouse-ear cress).